The chain runs to 565 residues: Efflux pump aunC (565 aa).

The segment covering 1–14 (MSDTARISGGSFTS) has biased composition (polar residues). A disordered region spans residues 1–57 (MSDTARISGGSFTSPPGRDVELNSFKEASQTRLYPYSSRKEEEGREDEQQRPEREED). The span at 38–54 (SRKEEEGREDEQQRPER) shows a compositional bias: basic and acidic residues. The next 14 helical transmembrane spans lie at 59 to 79 (GALT…CIFC), 103 to 123 (DVGW…LPFG), 128 to 148 (FFPI…GSFI), 164 to 184 (VAGL…TQCV), 194 to 214 (GFIM…GGAF), 222 to 242 (WCFY…FFTF), 257 to 277 (AAGL…CLLL), 293 to 313 (IIAL…LQLW), 335 to 355 (LYGF…PIWF), 378 to 398 (VIFA…GPFM), 399 to 419 (LLSA…HPSS), 425 to 445 (IGYQ…PVFV), 457 to 477 (TATA…VSVA), and 530 to 550 (VHTF…ATVI).

Belongs to the major facilitator superfamily. TCR/Tet family.

It localises to the cell membrane. In terms of biological role, efflux pump; part of the gene cluster that mediates the biosynthesis of aurasperone B, a dimeric gamma-naphthopyrone. In Aspergillus niger (strain ATCC MYA-4892 / CBS 513.88 / FGSC A1513), this protein is Efflux pump aunC.